Reading from the N-terminus, the 451-residue chain is Tubulin alpha chain (451 aa).

Q11 serves as a coordination point for GTP. Position 40 is an N6-acetyllysine (K40). GTP contacts are provided by E71, S140, G144, T145, T179, N206, and N228. Position 71 (E71) interacts with Mg(2+). E254 is a catalytic residue.

It belongs to the tubulin family. In terms of assembly, dimer of alpha and beta chains. A typical microtubule is a hollow water-filled tube with an outer diameter of 25 nm and an inner diameter of 15 nM. Alpha-beta heterodimers associate head-to-tail to form protofilaments running lengthwise along the microtubule wall with the beta-tubulin subunit facing the microtubule plus end conferring a structural polarity. Microtubules usually have 13 protofilaments but different protofilament numbers can be found in some organisms and specialized cells. The cofactor is Mg(2+). Post-translationally, undergoes a tyrosination/detyrosination cycle, the cyclic removal and re-addition of a C-terminal tyrosine residue by the enzymes tubulin tyrosine carboxypeptidase (TTCP) and tubulin tyrosine ligase (TTL), respectively. Acetylation of alpha chains at Lys-40 stabilizes microtubules and affects affinity and processivity of microtubule motors. This modification has a role in multiple cellular functions, ranging from cell motility, cell cycle progression or cell differentiation to intracellular trafficking and signaling. Actively expressed in the lens but does not seem to be lens-specific.

Its subcellular location is the cytoplasm. It localises to the cytoskeleton. It catalyses the reaction GTP + H2O = GDP + phosphate + H(+). Tubulin is the major constituent of microtubules, a cylinder consisting of laterally associated linear protofilaments composed of alpha- and beta-tubulin heterodimers. Microtubules grow by the addition of GTP-tubulin dimers to the microtubule end, where a stabilizing cap forms. Below the cap, tubulin dimers are in GDP-bound state, owing to GTPase activity of alpha-tubulin. The sequence is that of Tubulin alpha chain from Enteroctopus dofleini (North Pacific giant octopus).